We begin with the raw amino-acid sequence, 321 residues long: Probable arabinan endo-1,5-alpha-L-arabinosidase C (321 aa).

Positions 1–18 (MYLYTLILLFLASANVNA) are cleaved as a signal peptide. The active-site Proton acceptor is the aspartate 33. Asparagine 192 is a glycosylation site (N-linked (GlcNAc...) asparagine). The Proton donor role is filled by glutamate 200. The N-linked (GlcNAc...) asparagine glycan is linked to asparagine 224.

This sequence belongs to the glycosyl hydrolase 43 family.

Its subcellular location is the secreted. The catalysed reaction is Endohydrolysis of (1-&gt;5)-alpha-arabinofuranosidic linkages in (1-&gt;5)-arabinans.. It participates in glycan metabolism; L-arabinan degradation. Endo-1,5-alpha-L-arabinanase involved in degradation of pectin. Its preferred substrate is linear 1,5-alpha-L-arabinan. In Aspergillus fumigatus (strain ATCC MYA-4609 / CBS 101355 / FGSC A1100 / Af293) (Neosartorya fumigata), this protein is Probable arabinan endo-1,5-alpha-L-arabinosidase C (abnC).